The sequence spans 315 residues: DDRGK domain-containing protein 1 (315 aa).

Residues 1–28 (MVGPWVYLVAAVLLIGLILFLTRSRGRA) form a helical membrane-spanning segment. The tract at residues 1–115 (MVGPWVYLVA…IEKPAEVHPT (115 aa)) is mediates interaction with CDK5RAP3. Residues 29–315 (AAADGEPLHN…GQDLPAQASA (287 aa)) lie on the Cytoplasmic side of the membrane. Residues 30 to 184 (AADGEPLHNE…ERKAQEEQAR (155 aa)) form a disordered region. Over residues 34–43 (EPLHNEEERA) the composition is skewed to basic and acidic residues. The residue at position 73 (serine 73) is a Phosphoserine. The tract at residues 119–217 (GAKKLRKLEE…MTEEQSHSFL (99 aa)) is mediates interaction with TRIP4. The segment covering 125-184 (KLEEKQARKAQREAEEAEREERKRLESQREAEWKKEEERLRLKEEQKEEEERKAQEEQAR) has biased composition (basic and acidic residues). The UFM1-interacting motif (UFIM) signature appears at 196–210 (AFVVEEEGVSETMTE). A mediates interaction with UFL1 region spans residues 217 to 315 (LTEFINYIKK…GQDLPAQASA (99 aa)). One can recognise a PCI domain in the interval 230–274 (VLLEDLAFQMGLRTQDAINRIQDLLTEGTLTGVIDDRGKFIYITP). Lysine 268 participates in a covalent cross-link: Glycyl lysine isopeptide (Lys-Gly) (interchain with G-Cter in UFM1).

Belongs to the DDRGK1 family. As to quaternary structure, component of the UFM1 ribosome E3 ligase (UREL) complex, composed of UFL1, DDRGK1 and CDK5RAP3. Interacts with (unphosphorylated) ERN1/IRE1-alpha; interaction is dependent on UFM1 and takes place in response to endoplasmic reticulum stress, regulating ERN1/IRE1-alpha stability. Interacts with NFKBIA. Interacts with SOX9. Ufmylated; conjugated to ubiquitin-like protein UFM1, probably at Lys-268 by UFL1. The relevance of ufmylation is however unclear: as DDRGK1 acts as a substrate adapter for ufmylation, it is uncertain whether ufmylation is a collateral effect of the ufmylation process or whether it is required to regulate its activity. Post-translationally, ubiquitinated. Ubiquitination probably triggers proteasomal degradation and is negatively regulated by UFL1, the enzyme involved in the ufmylation of DDRGK1. Ubiquitously expressed. Higher expression in pancreatic islets, pancreatic acini and testis (at protein level). Highly expressed in the intestinal exocrine cells.

It is found in the endoplasmic reticulum membrane. In terms of biological role, component of the UFM1 ribosome E3 ligase (UREL) complex, a multiprotein complex that catalyzes ufmylation of endoplasmic reticulum-docked proteins. The UREL complex plays a key role in ribosome recycling by mediating mono-ufmylation of the RPL26/uL24 subunit of the 60S ribosome following ribosome dissociation: ufmylation weakens the junction between post-termination 60S subunits and SEC61 translocons, promoting release and recycling of the large ribosomal subunit from the endoplasmic reticulum membrane. Ufmylation of RPL26/uL24 and subsequent 60S ribosome recycling either take place after normal termination of translation or after ribosome stalling during cotranslational translocation at the endoplasmic reticulum. Within the UREL complex, DDRGK1 tethers the complex to the endoplasmic reticulum membrane to restrict its activity to endoplasmic reticulum-docked ribosomes and acts as an ufmylation 'reader': following RPL26/uL24 ufmylation, DDRGK1 specifically binds to ufmylated RPL26/uL24 via its UFIM motif, resulting in stable association between the 60S ribosome and the UREL complex, followed by dissociation of the 60S ribosome subunit from the endoplasmic reticulum membrane. The UREL complex is also involved in reticulophagy in response to endoplasmic reticulum stress by promoting ufmylation of proteins such as CYB5R3 and RPN1, thereby promoting lysosomal degradation of ufmylated proteins. Ufmylation-dependent reticulophagy inhibits the unfolded protein response (UPR) by regulating ERN1/IRE1-alpha stability. Acts as a regulator of immunity by promoting differentiation of B-cells into plasma cells: acts by promoting expansion of the endoplasmic reticulum and regulating the unfolded protein response (UPR). May also be required for TRIP4 ufmylation. May play a role in NF-kappa-B-mediated transcription through regulation of the phosphorylation and the degradation of NFKBIA, the inhibitor of NF-kappa-B. Plays a role in cartilage development through SOX9, inhibiting the ubiquitin-mediated proteasomal degradation of this transcriptional regulator. Required for stabilization and ufmylation of ATG9A. The chain is DDRGK domain-containing protein 1 from Mus musculus (Mouse).